Here is a 379-residue protein sequence, read N- to C-terminus: GPN-loop GTPase QQT2 (379 aa).

N-acetylmethionine is present on Met-1. Residue 51–56 coordinates GTP; the sequence is GSGKTS. The short motif at 108 to 110 is the Gly-Pro-Asn (GPN)-loop; involved in dimer interface element; the sequence is GPN. GTP contacts are provided by residues 211-214 and Ala-267; that span reads NKTD. Positions 288-322 form a coiled coil; that stretch reads METYKADLDMRKADKERLEEERKKHEMEKLRKDME. Basic and acidic residues-rich tracts occupy residues 303 to 322 and 335 to 346; these read ERLE…KDME and LKDRDATEKMML. Positions 303–379 are disordered; it reads ERLEEERKKH…EDDETKHYYL (77 aa). The span at 347–372 shows a compositional bias: acidic residues; the sequence is EEDDEDFQVEDEEDSDDAIDEDDEDD.

Belongs to the GPN-loop GTPase family. In terms of assembly, heterodimer with QQT1. In terms of tissue distribution, expressed in individual cells of roots, leaves and flowers.

It is found in the cytoplasm. It localises to the nucleus. Its subcellular location is the cytoskeleton. The protein resides in the spindle. The protein localises to the phragmoplast. In terms of biological role, small GTPase that is essential for the correct formation of the tangential divisions in early embryos. Associates with microtubule during mitosis and may function in the positioning of the division plane. May participate in the patterning of the early embryo at the octant-dermatogen transition. This is GPN-loop GTPase QQT2 from Arabidopsis thaliana (Mouse-ear cress).